A 729-amino-acid polypeptide reads, in one-letter code: MADSVTIGQLEKLSVQCDKENQHVENKENNINSDNINLLEATKTTLPIPNTSNTNPPMNQSSSPTTTTTTPTTTTTPTTAEPAKKRKIFAKLHLLNRDGSVKNYFEMKKTKLIIGSDTELADIQVVRPGIYPKHVEIIYDKEKKKFYLNPLIDPKDSDNVRLNFVPFLHKKEVLGNGDIISIGFRSIKMEFIEKVTVDQLVQPEKQYIPSNTPTCITNTPIQTPPTTSPPSSTTTNKKDNTSTNVTKKPIATVPSTTTSTKKSSVVPESKPATKTITKETPKPTKTTTTTTVTTSKPTVKPTAVKKSINDDDYGDDYNEEEDDDDEEEEEEEEEEEEEEEVESKQIKVVNSKPNDDDMSCKKPMKYTNTNEEMRKSLASNVGGINSKIISKGDSVRNLLPISSRRPTAPVTPTKPTSTKKVTTPKKATVVKPPKESKVPKVPKVPKVPKAAVVASIDENGKEDYIRLISFKKAKDIVKAFQSHEKLVKSKNNGHGNISNEKKEILKCFEVLDQINWRLSTDKPGDSRPISSYFKNIPSLSEFDSELLTDYYSMISEPMSINSILSSVIYTADYNIDNCLDDFNQVLENSMTYNSENSIIYWLAHYCKIELYKALSNSGIIQNKLYLDIKKDSETFLKSIGTQLKGDGISLPQIIAQSVSKNKEQTVPQEEDEEEEEEEEEEEEEEEEGEEGKEDEEEEEKEEEEGEENEEEEDVEIDDCEIDQESDDDQ.

Residues 46 to 79 are compositionally biased toward low complexity; sequence LPIPNTSNTNPPMNQSSSPTTTTTTPTTTTTPTT. Residues 46-83 form a disordered region; the sequence is LPIPNTSNTNPPMNQSSSPTTTTTTPTTTTTPTTAEPA. An FHA domain is found at 112–167; the sequence is LIIGSDTELADIQVVRPGIYPKHVEIIYDKEKKKFYLNPLIDPKDSDNVRLNFVPF. 3 stretches are compositionally biased toward low complexity: residues 208 to 221, 229 to 275, and 283 to 306; these read IPSN…NTPI, PPSS…ATKT, and PTKT…AVKK. 2 disordered regions span residues 208 to 361 and 403 to 442; these read IPSN…MSCK and SRRP…PKVP. The span at 310–341 shows a compositional bias: acidic residues; that stretch reads DDDYGDDYNEEEDDDDEEEEEEEEEEEEEEEV. Residues 315–352 adopt a coiled-coil conformation; the sequence is DDYNEEEDDDDEEEEEEEEEEEEEEEVESKQIKVVNSK. The segment covering 406 to 431 has biased composition (low complexity); the sequence is PTAPVTPTKPTSTKKVTTPKKATVVK. The region spanning 498 to 617 is the Bromo domain; that stretch reads SNEKKEILKC…IELYKALSNS (120 aa). The stretch at 659-718 forms a coiled coil; sequence SKNKEQTVPQEEDEEEEEEEEEEEEEEEEGEEGKEDEEEEEKEEEEGEENEEEEDVEIDD. Residues 659–729 form a disordered region; sequence SKNKEQTVPQ…EIDQESDDDQ (71 aa). A compositionally biased stretch (acidic residues) spans 668–729; that stretch reads QEEDEEEEEE…EIDQESDDDQ (62 aa).

The chain is Bromo and FHA domain-containing protein DDB_G0267958 from Dictyostelium discoideum (Social amoeba).